A 324-amino-acid polypeptide reads, in one-letter code: Annexin A3 (324 aa).

Annexin repeat units follow at residues 19-90 (FNPS…ALIT), 91-162 (APAV…TLAD), 174-246 (HLAK…AVVR), and 250-321 (NTPA…KICG). Lysine 178 carries the N6-acetyllysine modification. A Phosphothreonine modification is found at threonine 268.

It belongs to the annexin family.

Its function is as follows. Inhibitor of phospholipase A2, also possesses anti-coagulant properties. The polypeptide is Annexin A3 (Anxa3) (Rattus norvegicus (Rat)).